A 538-amino-acid polypeptide reads, in one-letter code: Bifunctional purine biosynthesis protein PurH (538 aa).

Residues 8–158 (IPAPDKVEIK…KNHAYVTILT (151 aa)) form the MGS-like domain.

This sequence belongs to the PurH family.

It catalyses the reaction (6R)-10-formyltetrahydrofolate + 5-amino-1-(5-phospho-beta-D-ribosyl)imidazole-4-carboxamide = 5-formamido-1-(5-phospho-D-ribosyl)imidazole-4-carboxamide + (6S)-5,6,7,8-tetrahydrofolate. The catalysed reaction is IMP + H2O = 5-formamido-1-(5-phospho-D-ribosyl)imidazole-4-carboxamide. It functions in the pathway purine metabolism; IMP biosynthesis via de novo pathway; 5-formamido-1-(5-phospho-D-ribosyl)imidazole-4-carboxamide from 5-amino-1-(5-phospho-D-ribosyl)imidazole-4-carboxamide (10-formyl THF route): step 1/1. Its pathway is purine metabolism; IMP biosynthesis via de novo pathway; IMP from 5-formamido-1-(5-phospho-D-ribosyl)imidazole-4-carboxamide: step 1/1. This Rhizobium leguminosarum bv. trifolii (strain WSM2304) protein is Bifunctional purine biosynthesis protein PurH.